We begin with the raw amino-acid sequence, 43 residues long: Neurotrophin-4 (43 aa).

Belongs to the NGF-beta family.

Its function is as follows. NT-4 could play a role in oogenesis and/or early embryogenesis. NT-4 interacts with the low affinity NGF receptor and elicits neurite outgrowth from explanted dorsal root ganglia with no and lower activity in sympathetic and nodose ganglia, respectively. The chain is Neurotrophin-4 (NTF4) from Macrovipera lebetinus (Levantine viper).